The following is a 40-amino-acid chain: Photosystem II reaction center protein J (40 aa).

The chain crosses the membrane as a helical span at residues 8–28 (IPLWLIGTVTGIPVIGSIGIF).

It belongs to the PsbJ family. As to quaternary structure, PSII is composed of 1 copy each of membrane proteins PsbA, PsbB, PsbC, PsbD, PsbE, PsbF, PsbH, PsbI, PsbJ, PsbK, PsbL, PsbM, PsbT, PsbX, PsbY, PsbZ, Psb30/Ycf12, at least 3 peripheral proteins of the oxygen-evolving complex and a large number of cofactors. It forms dimeric complexes.

Its subcellular location is the plastid. It localises to the chloroplast thylakoid membrane. Functionally, one of the components of the core complex of photosystem II (PSII). PSII is a light-driven water:plastoquinone oxidoreductase that uses light energy to abstract electrons from H(2)O, generating O(2) and a proton gradient subsequently used for ATP formation. It consists of a core antenna complex that captures photons, and an electron transfer chain that converts photonic excitation into a charge separation. The chain is Photosystem II reaction center protein J from Chloranthus spicatus (Chulantree).